The primary structure comprises 528 residues: Phosphoenolpyruvate carboxykinase (ATP) (528 aa).

Positions 56, 192, and 198 each coordinate substrate. Residues lysine 198, histidine 217, and 233 to 241 (GLSGTGKTT) contribute to the ATP site. Residues lysine 198 and histidine 217 each contribute to the Mn(2+) site. Aspartate 254 contributes to the Mn(2+) binding site. Residues glutamate 282, arginine 319, and threonine 444 each contribute to the ATP site. Residue arginine 319 coordinates substrate.

The protein belongs to the phosphoenolpyruvate carboxykinase (ATP) family. Requires Mn(2+) as cofactor.

Its subcellular location is the cytoplasm. It catalyses the reaction oxaloacetate + ATP = phosphoenolpyruvate + ADP + CO2. Its pathway is carbohydrate biosynthesis; gluconeogenesis. Its function is as follows. Involved in the gluconeogenesis. Catalyzes the conversion of oxaloacetate (OAA) to phosphoenolpyruvate (PEP) through direct phosphoryl transfer between the nucleoside triphosphate and OAA. This Bacillus anthracis (strain A0248) protein is Phosphoenolpyruvate carboxykinase (ATP).